A 281-amino-acid polypeptide reads, in one-letter code: CDAN1-interacting nuclease 1 (281 aa).

T114 is subject to Phosphothreonine.

The protein resides in the nucleus. It localises to the cytoplasm. Functionally, plays a role in erythroid cell differentiation. The protein is CDAN1-interacting nuclease 1 of Homo sapiens (Human).